We begin with the raw amino-acid sequence, 56 residues long: Turripeptide XIV-01 (56 aa).

An N-terminal signal peptide occupies residues 1–21 (MRFHVLLTVALLLTSLMSIEA). The propeptide occupies 22–30 (KPVNGAEME).

In terms of processing, contains 2 disulfide bonds. In terms of tissue distribution, expressed by the venom duct.

The protein localises to the secreted. This Gemmula speciosa (Splendid gem-turris) protein is Turripeptide XIV-01.